A 395-amino-acid polypeptide reads, in one-letter code: Succinyl-diaminopimelate desuccinylase (395 aa).

His-74 is a Zn(2+) binding site. Asp-76 is an active-site residue. Residue Asp-107 participates in Zn(2+) binding. Catalysis depends on Glu-141, which acts as the Proton acceptor. Zn(2+) is bound by residues Glu-142, Glu-170, and His-368.

The protein belongs to the peptidase M20A family. DapE subfamily. In terms of assembly, homodimer. The cofactor is Zn(2+). Co(2+) serves as cofactor.

It catalyses the reaction N-succinyl-(2S,6S)-2,6-diaminopimelate + H2O = (2S,6S)-2,6-diaminopimelate + succinate. Its pathway is amino-acid biosynthesis; L-lysine biosynthesis via DAP pathway; LL-2,6-diaminopimelate from (S)-tetrahydrodipicolinate (succinylase route): step 3/3. In terms of biological role, catalyzes the hydrolysis of N-succinyl-L,L-diaminopimelic acid (SDAP), forming succinate and LL-2,6-diaminopimelate (DAP), an intermediate involved in the bacterial biosynthesis of lysine and meso-diaminopimelic acid, an essential component of bacterial cell walls. The protein is Succinyl-diaminopimelate desuccinylase of Brucella melitensis biotype 2 (strain ATCC 23457).